The following is a 383-amino-acid chain: Ceramide synthase 3 (383 aa).

The chain crosses the membrane as a helical span at residues valine 32 to valine 52. The interval asparagine 66–cysteine 127 is homeobox-like. Positions glutamine 130–phenylalanine 331 constitute a TLC domain. The next 5 helical transmembrane spans lie at phenylalanine 139–alanine 159, leucine 174–phenylalanine 194, phenylalanine 205–alanine 225, leucine 263–isoleucine 283, and isoleucine 302–isoleucine 322. At leucine 323–arginine 383 the chain is on the cytoplasmic side. The residue at position 340 (serine 340) is a Phosphoserine. The segment at serine 340 to arginine 383 is disordered. A compositionally biased stretch (acidic residues) spans asparagine 342–alanine 354. The span at glutamate 355 to tyrosine 364 shows a compositional bias: basic and acidic residues.

Predominantly expressed in testis. In skin, present in the upper stratum spinosum and stratum granulosum (at protein level).

The protein localises to the endoplasmic reticulum membrane. It carries out the reaction a very long-chain fatty acyl-CoA + a sphingoid base = an N-(very-long-chain fatty acyl)-sphingoid base + CoA + H(+). The catalysed reaction is docosanoyl-CoA + sphinganine = N-docosanoylsphinganine + CoA + H(+). The enzyme catalyses tetracosanoyl-CoA + sphinganine = N-tetracosanoylsphinganine + CoA + H(+). It catalyses the reaction hexacosanoyl-CoA + sphinganine = N-hexacosanoylsphinganine + CoA + H(+). It carries out the reaction 2-hydroxydocosanoyl-CoA + sphinganine = N-(2-hydroxydocosanoyl)-sphinganine + CoA + H(+). The catalysed reaction is 2-hydroxytetracosanoyl-CoA + sphinganine = N-(2-hydroxytetracosanoyl)-sphinganine + CoA + H(+). The enzyme catalyses an ultra-long-chain fatty acyl-CoA + a sphingoid base = an N-(ultra-long-chain-acyl)-sphingoid base + CoA + H(+). It catalyses the reaction octacosanoyl-CoA + sphinganine = N-(octacosanoyl)-sphinganine + CoA + H(+). It carries out the reaction a fatty acyl-CoA + sphing-4-enine = an N-acylsphing-4-enine + CoA + H(+). The catalysed reaction is sphinganine + octadecanoyl-CoA = N-(octadecanoyl)-sphinganine + CoA + H(+). The enzyme catalyses 2-hydroxyoctadecanoyl-CoA + sphinganine = N-(2-hydroxyoctadecanoyl)-sphinganine + CoA + H(+). The protein operates within lipid metabolism; sphingolipid metabolism. Ceramide synthase that catalyzes the transfer of the acyl chain from acyl-CoA to a sphingoid base, with high selectivity toward very- and ultra-long-chain fatty acyl-CoA (chain length greater than C22). N-acylates sphinganine and sphingosine bases to form dihydroceramides and ceramides in de novo synthesis and salvage pathways, respectively. It is crucial for the synthesis of ultra-long-chain ceramides in the epidermis, to maintain epidermal lipid homeostasis and terminal differentiation. This is Ceramide synthase 3 from Mus musculus (Mouse).